The sequence spans 557 residues: Nicotinate phosphoribosyltransferase 2 (557 aa).

Residues tyrosine 31 and threonine 219 each coordinate nicotinate. Histidine 222 carries the phosphohistidine modification. Arginine 329 contacts nicotinate. Threonine 391 is a 5-phospho-alpha-D-ribose 1-diphosphate binding site.

The protein belongs to the NAPRTase family. Requires Mg(2+) as cofactor. It depends on Mn(2+) as a cofactor. Transiently phosphorylated on a His residue during the reaction cycle. Phosphorylation strongly increases the affinity for substrates and increases the rate of nicotinate D-ribonucleotide production. Dephosphorylation regenerates the low-affinity form of the enzyme, leading to product release.

It catalyses the reaction nicotinate + 5-phospho-alpha-D-ribose 1-diphosphate + ATP + H2O = nicotinate beta-D-ribonucleotide + ADP + phosphate + diphosphate. It participates in cofactor biosynthesis; NAD(+) biosynthesis; nicotinate D-ribonucleotide from nicotinate: step 1/1. Its function is as follows. Catalyzes the first step in the biosynthesis of NAD from nicotinic acid, the ATP-dependent synthesis of beta-nicotinate D-ribonucleotide from nicotinate and 5-phospho-D-ribose 1-phosphate. Helps prevent cellular oxidative stress via its role in NAD biosynthesis. The protein is Nicotinate phosphoribosyltransferase 2 of Arabidopsis thaliana (Mouse-ear cress).